Here is a 639-residue protein sequence, read N- to C-terminus: Mediator of RNA polymerase II transcription subunit 17 (639 aa).

Positions 160–187 (RLQSFNAAADKLLKSASRLENEVASETR) form a coiled coil.

Belongs to the Mediator complex subunit 17 family. As to quaternary structure, component of the Mediator complex.

The protein resides in the nucleus. Its function is as follows. Component of the Mediator complex, a coactivator involved in the regulated transcription of nearly all RNA polymerase II-dependent genes. Mediator functions as a bridge to convey information from gene-specific regulatory proteins to the basal RNA polymerase II transcription machinery. Mediator is recruited to promoters by direct interactions with regulatory proteins and serves as a scaffold for the assembly of a functional preinitiation complex with RNA polymerase II and the general transcription factors. This is Mediator of RNA polymerase II transcription subunit 17 (srb4) from Aspergillus fumigatus (strain ATCC MYA-4609 / CBS 101355 / FGSC A1100 / Af293) (Neosartorya fumigata).